Consider the following 476-residue polypeptide: Aspartyl/glutamyl-tRNA(Asn/Gln) amidotransferase subunit B (476 aa).

Belongs to the GatB/GatE family. GatB subfamily. Heterotrimer of A, B and C subunits.

It catalyses the reaction L-glutamyl-tRNA(Gln) + L-glutamine + ATP + H2O = L-glutaminyl-tRNA(Gln) + L-glutamate + ADP + phosphate + H(+). The enzyme catalyses L-aspartyl-tRNA(Asn) + L-glutamine + ATP + H2O = L-asparaginyl-tRNA(Asn) + L-glutamate + ADP + phosphate + 2 H(+). Its function is as follows. Allows the formation of correctly charged Asn-tRNA(Asn) or Gln-tRNA(Gln) through the transamidation of misacylated Asp-tRNA(Asn) or Glu-tRNA(Gln) in organisms which lack either or both of asparaginyl-tRNA or glutaminyl-tRNA synthetases. The reaction takes place in the presence of glutamine and ATP through an activated phospho-Asp-tRNA(Asn) or phospho-Glu-tRNA(Gln). The sequence is that of Aspartyl/glutamyl-tRNA(Asn/Gln) amidotransferase subunit B from Lactobacillus delbrueckii subsp. bulgaricus (strain ATCC 11842 / DSM 20081 / BCRC 10696 / JCM 1002 / NBRC 13953 / NCIMB 11778 / NCTC 12712 / WDCM 00102 / Lb 14).